We begin with the raw amino-acid sequence, 207 residues long: Myosin light chain 6B (207 aa).

A disordered region spans residues 1–50 (MPPKKDAPVKKPAGPSISKPAAKSTPGTPLAKAKAEPAAPQAPAKSQEPP). A compositionally biased stretch (low complexity) spans 36-50 (EPAAPQAPAKSQEPP). EF-hand domains lie at 63-98 (DQLE…LGQN), 140-175 (GTYE…LGEK), and 175-207 (KMTE…ILSL).

In terms of assembly, myosin is a hexamer of 2 heavy chains and 4 light chains.

In terms of biological role, regulatory light chain of myosin. Does not bind calcium. This chain is Myosin light chain 6B, found in Mus musculus (Mouse).